We begin with the raw amino-acid sequence, 148 residues long: SsrA-binding protein (148 aa).

The interval 119–148 (AKGKKQHDKRQSMKEADWKREKQRLIKHTR) is disordered. The segment covering 127-142 (KRQSMKEADWKREKQR) has biased composition (basic and acidic residues).

This sequence belongs to the SmpB family.

The protein resides in the cytoplasm. In terms of biological role, required for rescue of stalled ribosomes mediated by trans-translation. Binds to transfer-messenger RNA (tmRNA), required for stable association of tmRNA with ribosomes. tmRNA and SmpB together mimic tRNA shape, replacing the anticodon stem-loop with SmpB. tmRNA is encoded by the ssrA gene; the 2 termini fold to resemble tRNA(Ala) and it encodes a 'tag peptide', a short internal open reading frame. During trans-translation Ala-aminoacylated tmRNA acts like a tRNA, entering the A-site of stalled ribosomes, displacing the stalled mRNA. The ribosome then switches to translate the ORF on the tmRNA; the nascent peptide is terminated with the 'tag peptide' encoded by the tmRNA and targeted for degradation. The ribosome is freed to recommence translation, which seems to be the essential function of trans-translation. In Neisseria gonorrhoeae (strain ATCC 700825 / FA 1090), this protein is SsrA-binding protein.